The primary structure comprises 523 residues: Bifunctional purine biosynthesis protein PurH (523 aa).

Residues M1 to V145 form the MGS-like domain.

Belongs to the PurH family.

It catalyses the reaction (6R)-10-formyltetrahydrofolate + 5-amino-1-(5-phospho-beta-D-ribosyl)imidazole-4-carboxamide = 5-formamido-1-(5-phospho-D-ribosyl)imidazole-4-carboxamide + (6S)-5,6,7,8-tetrahydrofolate. The enzyme catalyses IMP + H2O = 5-formamido-1-(5-phospho-D-ribosyl)imidazole-4-carboxamide. Its pathway is purine metabolism; IMP biosynthesis via de novo pathway; 5-formamido-1-(5-phospho-D-ribosyl)imidazole-4-carboxamide from 5-amino-1-(5-phospho-D-ribosyl)imidazole-4-carboxamide (10-formyl THF route): step 1/1. It functions in the pathway purine metabolism; IMP biosynthesis via de novo pathway; IMP from 5-formamido-1-(5-phospho-D-ribosyl)imidazole-4-carboxamide: step 1/1. The protein is Bifunctional purine biosynthesis protein PurH of Cupriavidus pinatubonensis (strain JMP 134 / LMG 1197) (Cupriavidus necator (strain JMP 134)).